The chain runs to 1993 residues: [F-actin]-monooxygenase MICAL3 (1993 aa).

The monooxygenase domain stretch occupies residues 2–494; sequence EERKQETTNQ…RHLYDSGETK (493 aa). FAD is bound by residues Cys-97, 116 to 118, 123 to 125, Phe-183, Tyr-298, and Asp-398; these read EKR and RNN. A Calponin-homology (CH) domain is found at 518-624; that stretch reads VARSSKLLGW…YLTQFYEMFK (107 aa). Phosphoserine is present on Ser-649. The segment at 658–704 is disordered; the sequence is GQTISRKRSPKDKKEKDSDGAGKRRKTSQSEEEEPPRSYKGERPTLV. The span at 669-679 shows a compositional bias: basic and acidic residues; it reads DKKEKDSDGAG. Phosphoserine is present on residues Ser-685 and Ser-687. The LIM zinc-binding domain occupies 762–824; the sequence is DTCYFCQKRV…KPHYCYRLSG (63 aa). 8 residues coordinate Zn(2+): Cys-764, Cys-767, His-785, Cys-788, Cys-791, Cys-794, Cys-814, and His-817. The tract at residues 854–886 is disordered; it reads NGLASVAASSAERSPGTSMNGLEEPSIAKRLRG. Polar residues predominate over residues 860–873; that stretch reads AASSAERSPGTSMN. Position 887 is a phosphothreonine (Thr-887). 4 disordered regions span residues 905-1023, 1039-1309, 1332-1546, and 1559-1837; these read ELEE…RLQQ, WTHI…LSGP, IRRS…FFTP, and KENG…EELK. A compositionally biased stretch (acidic residues) spans 938 to 951; sequence SEMEEEEEEDDEDD. Basic and acidic residues predominate over residues 975–988; sequence GRSEEELEASKNFE. Ser-977 bears the Phosphoserine mark. Residues 989–1014 are compositionally biased toward acidic residues; sequence PEEEEEEEEYEEEDEEYEEEEEEESS. Residues 1039 to 1051 show a composition bias toward basic and acidic residues; it reads WTHIREREAEERM. Over residues 1065 to 1090 the composition is skewed to acidic residues; sequence DEDDLEEDADSEPAETEGEAAEDGDP. Residues 1111 to 1148 show a composition bias toward basic and acidic residues; the sequence is EAEHRLQSQAKVKAELELRVSENEEEKPSDAPKQEERG. Residues Ser-1131 and Ser-1187 each carry the phosphoserine modification. The span at 1199-1212 shows a compositional bias: basic and acidic residues; it reads LREKPKAEVPEEQK. Over residues 1230–1239 the composition is skewed to polar residues; the sequence is SPTSPTSLQP. Over residues 1245–1255 the composition is skewed to pro residues; that stretch reads PPTPPTPPPTQ. Over residues 1257–1275 the composition is skewed to polar residues; that stretch reads PICSQPQPSSDASIPSPTK. A Phosphoserine modification is found at Ser-1272. Thr-1274 is modified (phosphothreonine). Phosphoserine is present on residues Ser-1276 and Ser-1335. A Phosphothreonine modification is found at Thr-1339. Phosphoserine occurs at positions 1369 and 1382. A compositionally biased stretch (basic and acidic residues) spans 1405–1420; it reads PSDKELRSSQEERRDL. Over residues 1421–1433 the composition is skewed to low complexity; sequence SSSSGLGLHDSSS. Ser-1431 is subject to Phosphoserine. Polar residues predominate over residues 1434–1452; that stretch reads NMKTLGSQSFNTSDSTMLT. Position 1452 is a phosphothreonine (Thr-1452). The span at 1454–1465 shows a compositional bias: pro residues; it reads PSSPPPPPPPNE. Residues 1516–1530 are compositionally biased toward acidic residues; that stretch reads SVDEIPFADDVEDTY. Positions 1584 to 1600 are enriched in basic and acidic residues; that stretch reads EAKELAEERMRAREKSV. Over residues 1623-1633 the composition is skewed to polar residues; sequence SSRSHTAQSQG. Phosphoserine is present on Ser-1640. Over residues 1665–1685 the composition is skewed to low complexity; it reads SPPSDSGGPDGSVTSSEGSSG. Positions 1686–1704 are enriched in basic residues; the sequence is KSKKRSSLFSPRRNKKEKK. Ser-1692 and Ser-1695 each carry phosphoserine. A compositionally biased stretch (polar residues) spans 1754 to 1763; that stretch reads TPSSGATVDS. Basic and acidic residues predominate over residues 1795-1811; it reads ILERSSQKSKREPRTYT. A coiled-coil region spans residues 1817 to 1983; that stretch reads AKLTRRVQKA…EEDKDLEAAM (167 aa). Residues 1819 to 1830 show a composition bias toward basic residues; that stretch reads LTRRVQKAARRQ. The 150-residue stretch at 1832-1981 folds into the bMERB domain; sequence KQEELKRLHR…EKEEDKDLEA (150 aa). Ser-1903 is subject to Phosphoserine.

The protein belongs to the Mical family. In terms of assembly, interacts with RAB1B, RAB8A, RAB10, RAB13 and RAB15 (in their GTP-bound forms); binding to RAB1B is of low affinity compared to other Rab proteins; at least in case of RAB8A can bind 2 molecules of RAB8A simultaneously through a high and a low affinity binding site, respectively. Interacts with ERC1 and RAB8A; may bridge ERC1 with RAB8A. Interacts with KIF23 and ERC1; enhances the interaction between KIF23 and ERC1. Interacts with NINL. It depends on FAD as a cofactor.

Its subcellular location is the cytoplasm. The protein resides in the cell cortex. It localises to the cytoskeleton. It is found in the nucleus. The protein localises to the midbody. Its subcellular location is the spindle. The protein resides in the cilium basal body. The enzyme catalyses L-methionyl-[F-actin] + NADPH + O2 + H(+) = L-methionyl-(R)-S-oxide-[F-actin] + NADP(+) + H2O. Monooxygenase that promotes depolymerization of F-actin by mediating oxidation of specific methionine residues on actin to form methionine-sulfoxide, resulting in actin filament disassembly and preventing repolymerization. In the absence of actin, it also functions as a NADPH oxidase producing H(2)O(2). Seems to act as Rab effector protein and play a role in vesicle trafficking. Involved in exocytic vesicles tethering and fusion: the monooxygenase activity is required for this process and implicates RAB8A associated with exocytotic vesicles. Required for cytokinesis. Contributes to stabilization and/or maturation of the intercellular bridge independently of its monooxygenase activity. Promotes recruitment of Rab8 and ERC1 to the intercellular bridge, and together these proteins are proposed to function in timely abscission. The chain is [F-actin]-monooxygenase MICAL3 (Mical3) from Mus musculus (Mouse).